Here is a 137-residue protein sequence, read N- to C-terminus: Large ribosomal subunit protein uL13 (137 aa).

The protein belongs to the universal ribosomal protein uL13 family. Part of the 50S ribosomal subunit.

Functionally, this protein is one of the early assembly proteins of the 50S ribosomal subunit, although it is not seen to bind rRNA by itself. It is important during the early stages of 50S assembly. The chain is Large ribosomal subunit protein uL13 from Methanocaldococcus jannaschii (strain ATCC 43067 / DSM 2661 / JAL-1 / JCM 10045 / NBRC 100440) (Methanococcus jannaschii).